Here is a 170-residue protein sequence, read N- to C-terminus: Ubiquitin-conjugating enzyme E2 2 (170 aa).

The UBC core domain occupies 4 to 150 (PARRRLMRDF…VKETVEKSWE (147 aa)). The active-site Glycyl thioester intermediate is C88. The segment at 148–170 (SWEDDLKDMDDGDDDDDDDDDDD) is disordered. Acidic residues predominate over residues 152–170 (DLKDMDDGDDDDDDDDDDD).

This sequence belongs to the ubiquitin-conjugating enzyme family.

It localises to the cytoplasm. It is found in the nucleus. The catalysed reaction is S-ubiquitinyl-[E1 ubiquitin-activating enzyme]-L-cysteine + [E2 ubiquitin-conjugating enzyme]-L-cysteine = [E1 ubiquitin-activating enzyme]-L-cysteine + S-ubiquitinyl-[E2 ubiquitin-conjugating enzyme]-L-cysteine.. It participates in protein modification; protein ubiquitination. Its function is as follows. Catalyzes the covalent attachment of ubiquitin to other proteins. Plays a role in transcription regulation by catalyzing the monoubiquitination of histone H2B to form H2BK123ub1. H2BK123ub1 gives a specific tag for epigenetic transcriptional activation and is also a prerequisite for H3K4me and H3K79me formation. Also involved in postreplication repair of UV-damaged DNA, in N-end rule-dependent protein degradation and in sporulation. In Eremothecium gossypii (strain ATCC 10895 / CBS 109.51 / FGSC 9923 / NRRL Y-1056) (Yeast), this protein is Ubiquitin-conjugating enzyme E2 2 (UBC2).